The sequence spans 151 residues: SsrA-binding protein (151 aa).

This sequence belongs to the SmpB family.

Its subcellular location is the cytoplasm. Functionally, required for rescue of stalled ribosomes mediated by trans-translation. Binds to transfer-messenger RNA (tmRNA), required for stable association of tmRNA with ribosomes. tmRNA and SmpB together mimic tRNA shape, replacing the anticodon stem-loop with SmpB. tmRNA is encoded by the ssrA gene; the 2 termini fold to resemble tRNA(Ala) and it encodes a 'tag peptide', a short internal open reading frame. During trans-translation Ala-aminoacylated tmRNA acts like a tRNA, entering the A-site of stalled ribosomes, displacing the stalled mRNA. The ribosome then switches to translate the ORF on the tmRNA; the nascent peptide is terminated with the 'tag peptide' encoded by the tmRNA and targeted for degradation. The ribosome is freed to recommence translation, which seems to be the essential function of trans-translation. The sequence is that of SsrA-binding protein from Campylobacter fetus subsp. fetus (strain 82-40).